The sequence spans 208 residues: Ribosomal RNA small subunit methyltransferase G (208 aa).

S-adenosyl-L-methionine-binding positions include Gly-76, Leu-81, 127-128 (VE), and Arg-142.

It belongs to the methyltransferase superfamily. RNA methyltransferase RsmG family.

The protein localises to the cytoplasm. It carries out the reaction guanosine(527) in 16S rRNA + S-adenosyl-L-methionine = N(7)-methylguanosine(527) in 16S rRNA + S-adenosyl-L-homocysteine. In terms of biological role, specifically methylates the N7 position of guanine in position 527 of 16S rRNA. The chain is Ribosomal RNA small subunit methyltransferase G from Legionella pneumophila (strain Corby).